The following is a 567-amino-acid chain: Hexose transporter HXT16 (567 aa).

A compositionally biased stretch (polar residues) spans 1–19 (MASEQSSPEINADNLNSSA). Residues 1 to 32 (MASEQSSPEINADNLNSSAADVHVQPPGEKEW) are disordered. Topologically, residues 1-55 (MASEQSSPEINADNLNSSAADVHVQPPGEKEWSDGFYDKEVINGNTPDAPKRGFL) are cytoplasmic. Residues 56 to 76 (GYLIIYLLCYPVSFGGFLPGW) traverse the membrane as a helical segment. At 77–112 (DSGITAGFINMDNFKMNFGSYKHSTGEYYLSNVRMG) the chain is on the extracellular side. The chain crosses the membrane as a helical span at residues 113–133 (LLVAMFSVGCSIGGVAFARLA). At 134–139 (DTLGRR) the chain is on the cytoplasmic side. The chain crosses the membrane as a helical span at residues 140–160 (LAIVIVVLVYMVGAIIQISSN). The Extracellular segment spans residues 161–170 (HKWYQYFVGK). A helical transmembrane segment spans residues 171-191 (IIYGLGAGGCSVLCPMLLSEI). Topologically, residues 192-197 (APTDLR) are cytoplasmic. A helical transmembrane segment spans residues 198–218 (GGLVSLYQLNMTFGIFLGYCS). The Extracellular portion of the chain corresponds to 219 to 232 (VYGTRKYSNTAQWR). A helical transmembrane segment spans residues 233-253 (IPVGLCFLWALIIIVGMLLVP). At 254–336 (ESPRYLIECE…VQTFLQLTGE (83 aa)) the chain is on the cytoplasmic side. Residues 337 to 353 (NYFFFYGTTIFKSVGLT) traverse the membrane as a helical segment. Residues 354–359 (DGFETS) lie on the Extracellular side of the membrane. Residues 360–377 (IVLGTVNFFSTIIAVMVV) form a helical membrane-spanning segment. Residues 378–384 (DKIGRRK) lie on the Cytoplasmic side of the membrane. Residues 385–405 (CLLFGAASMMACMVIFASIGV) form a helical membrane-spanning segment. The Extracellular portion of the chain corresponds to 406-427 (KCLYPHGQDGPSSKGAGNAMIV). A helical transmembrane segment spans residues 428 to 448 (FTCFYIFCFATTWAPVAYIVV). Residues 449–465 (AESFPSKVKSKAMSIST) lie on the Cytoplasmic side of the membrane. A helical transmembrane segment spans residues 466-486 (AFNWLWQFLIGFFTPFITGSI). Position 487 (His487) is a topological domain, extracellular. Residues 488–508 (FYYGYVFVGCLVAMFLYVFFF) traverse the membrane as a helical segment. The Cytoplasmic segment spans residues 509 to 567 (LPETIGLSLEETQLLYEEGIKPWKSASWVPPSRRGASSRETEAKKKSWKEVLKFPKSFN). Residues 533-555 (SASWVPPSRRGASSRETEAKKKS) form a disordered region. Residues 545 to 555 (SSRETEAKKKS) show a composition bias toward basic and acidic residues.

The protein belongs to the major facilitator superfamily. Sugar transporter (TC 2.A.1.1) family.

The protein localises to the membrane. Functionally, probable glucose transporter. This chain is Hexose transporter HXT16 (HXT16), found in Saccharomyces cerevisiae (strain ATCC 204508 / S288c) (Baker's yeast).